The primary structure comprises 132 residues: MTMTDPVADMLTRLRNANSAYHDTVSMPSSKLKTRVAEILKAEGYIQDWREEEAEVGKKLTIDLKFGPQRERAIAGLRRISKPGLRVYAKSTNLPHVLGGLGIAILSTSSGLLTNQQAAKKGVGGEVLAYVW.

The protein belongs to the universal ribosomal protein uS8 family. Part of the 30S ribosomal subunit. Contacts proteins S5 and S12.

Its function is as follows. One of the primary rRNA binding proteins, it binds directly to 16S rRNA central domain where it helps coordinate assembly of the platform of the 30S subunit. This is Small ribosomal subunit protein uS8 from Micrococcus luteus (strain ATCC 4698 / DSM 20030 / JCM 1464 / CCM 169 / CCUG 5858 / IAM 1056 / NBRC 3333 / NCIMB 9278 / NCTC 2665 / VKM Ac-2230) (Micrococcus lysodeikticus).